The following is a 101-amino-acid chain: NADH-quinone oxidoreductase subunit K (101 aa).

A run of 3 helical transmembrane segments spans residues 4 to 24 (LEHYLTVAATLFVIGIFGLFL), 30 to 50 (IVLLMSIELMLLAVNINLVAF), and 65 to 85 (FVLTVAAAEAAIGLAILVCFF).

This sequence belongs to the complex I subunit 4L family. As to quaternary structure, NDH-1 is composed of 14 different subunits. Subunits NuoA, H, J, K, L, M, N constitute the membrane sector of the complex.

It localises to the cell inner membrane. It catalyses the reaction a quinone + NADH + 5 H(+)(in) = a quinol + NAD(+) + 4 H(+)(out). In terms of biological role, NDH-1 shuttles electrons from NADH, via FMN and iron-sulfur (Fe-S) centers, to quinones in the respiratory chain. The immediate electron acceptor for the enzyme in this species is believed to be ubiquinone. Couples the redox reaction to proton translocation (for every two electrons transferred, four hydrogen ions are translocated across the cytoplasmic membrane), and thus conserves the redox energy in a proton gradient. This chain is NADH-quinone oxidoreductase subunit K, found in Ruegeria pomeroyi (strain ATCC 700808 / DSM 15171 / DSS-3) (Silicibacter pomeroyi).